A 682-amino-acid polypeptide reads, in one-letter code: Zinc finger protein 16 (682 aa).

Residues 1 to 10 are compositionally biased toward basic and acidic residues; sequence MPSLRTRREE. The tract at residues 1–43 is disordered; that stretch reads MPSLRTRREEAEMELSVPGPSPWTPAAQARVRDAPAVTHPGSA. The interval 62–210 is necessary for transcription activation; the sequence is YQQPDCDTRT…GVPTAESPLI (149 aa). A C2H2-type 1; degenerate zinc finger spans residues 209-231; sequence LICNECGKTFQGNPDLIQRQIVH. The segment at 237-259 adopts a C2H2-type 2; degenerate zinc-finger fold; the sequence is FMCDDCGKTFSQNSVLKNRHRSH. Residue K253 forms a Glycyl lysine isopeptide (Lys-Gly) (interchain with G-Cter in SUMO2) linkage. C2H2-type zinc fingers lie at residues 265–287, 293–315, 321–343, 349–371, 377–399, 405–427, 433–455, and 461–483; these read YQCSECGKAFRGHSDFSRHQSHH, YMCNECGKAFSQNSSLKKHQKSH, YECNECGKAFRRSSNLIQHQRIH, YVCSECGKAFRRSSNLIKHHRTH, FECGECGKAFSQSAHLRKHQRVH, YECNDCGKPFSRVSNLIKHHRVH, YKCSDCGKAFSQSSSLIQHRRIH, and HVCNVCGKAFSYSSVLRKHQIIH. Required for nuclear localization regions lie at residues 268–393 and 341–373; these read SECG…AHLR and RIHSGEKPYVCSECGKAFRRSSNLIKHHRTHTG. Positions 473–503 are required for nuclear localization; it reads SSVLRKHQIIHTGEKPYRCSVCGKAFSHSSA. K487 carries the N6-acetyllysine modification. 7 C2H2-type zinc fingers span residues 489–511, 517–539, 545–567, 573–595, 601–623, 629–651, and 657–679; these read YRCSVCGKAFSHSSALIQHQGVH, YACHECGKTFGRSSNLILHQRVH, YECTECGKTFSQSSTLIQHQRIH, HECNQCGKAFNRSSNLIHHQKVH, YTCVECGKGFSQSSHLIQHQIIH, YKCSECGKAFSQRSVLIQHQRIH, and YDCAACGKAFSQRSKLIKHQLIH.

It belongs to the krueppel C2H2-type zinc-finger protein family. As to quaternary structure, interacts with INCA1; the interaction inhibits INCA1 activity and induces the cell cycle process. Ubiquitous.

It is found in the nucleus. Its function is as follows. Acts as a transcriptional activator. Promotes cell proliferation by facilitating the cell cycle phase transition from the S to G2/M phase. Involved in both the hemin- and phorbol myristate acetate (PMA)-induced erythroid and megakaryocytic differentiation, respectively. Also plays a role as an inhibitor of cell apoptosis. The polypeptide is Zinc finger protein 16 (ZNF16) (Homo sapiens (Human)).